The chain runs to 481 residues: Aspartyl/glutamyl-tRNA(Asn/Gln) amidotransferase subunit B (481 aa).

It belongs to the GatB/GatE family. GatB subfamily. Heterotrimer of A, B and C subunits.

The catalysed reaction is L-glutamyl-tRNA(Gln) + L-glutamine + ATP + H2O = L-glutaminyl-tRNA(Gln) + L-glutamate + ADP + phosphate + H(+). The enzyme catalyses L-aspartyl-tRNA(Asn) + L-glutamine + ATP + H2O = L-asparaginyl-tRNA(Asn) + L-glutamate + ADP + phosphate + 2 H(+). Functionally, allows the formation of correctly charged Asn-tRNA(Asn) or Gln-tRNA(Gln) through the transamidation of misacylated Asp-tRNA(Asn) or Glu-tRNA(Gln) in organisms which lack either or both of asparaginyl-tRNA or glutaminyl-tRNA synthetases. The reaction takes place in the presence of glutamine and ATP through an activated phospho-Asp-tRNA(Asn) or phospho-Glu-tRNA(Gln). This chain is Aspartyl/glutamyl-tRNA(Asn/Gln) amidotransferase subunit B, found in Fusobacterium nucleatum subsp. nucleatum (strain ATCC 25586 / DSM 15643 / BCRC 10681 / CIP 101130 / JCM 8532 / KCTC 2640 / LMG 13131 / VPI 4355).